The chain runs to 341 residues: Retinol dehydrogenase 10 (341 aa).

A helical; Signal-anchor membrane pass occupies residues 3 to 23; it reads IVLEFFLVTFKVLWAFVLAAA. Position 40–64 (40–64) interacts with NADP(+); it reads LITGAGSGLGRLFALEFARRRAQLV. Position 197 (Ser-197) interacts with substrate. The Proton acceptor role is filled by Tyr-210.

The protein belongs to the short-chain dehydrogenases/reductases (SDR) family.

The protein localises to the microsome membrane. It is found in the endoplasmic reticulum membrane. The catalysed reaction is all-trans-retinol + NADP(+) = all-trans-retinal + NADPH + H(+). The protein operates within cofactor metabolism; retinol metabolism. Functionally, retinol dehydrogenase with a clear preference for NADP. Converts all-trans-retinol to all-trans-retinal. Has no detectable activity towards 11-cis-retinol, 9-cis-retinol and 13-cis-retinol. This chain is Retinol dehydrogenase 10 (rdh10), found in Xenopus tropicalis (Western clawed frog).